Here is a 198-residue protein sequence, read N- to C-terminus: Putative pseudouridine methyltransferase (198 aa).

S-adenosyl-L-methionine is bound by residues M132 and C186.

The protein belongs to the methyltransferase superfamily. TrmY family.

The protein resides in the cytoplasm. The sequence is that of Putative pseudouridine methyltransferase from Shewanella baltica (strain OS185).